Here is a 551-residue protein sequence, read N- to C-terminus: Calnexin homolog (551 aa).

The signal sequence occupies residues 1 to 26 (MVDRKEIPLAMGLLAVLLFFVASSSS). Topologically, residues 27 to 480 (FHLVRASDEV…EKGEKQPNLT (454 aa)) are lumenal. Ca(2+) is bound by residues Ser-44 and Asp-75. Cys-118 and Cys-153 are oxidised to a cystine. An alpha-D-glucoside is bound by residues Tyr-122 and Lys-124. N-linked (GlcNAc...) asparagine glycosylation is present at Asn-140. An alpha-D-glucoside is bound by residues Tyr-144 and Asp-151. Residues 226–330 (ALIPSKTIPD…CGEWKRPTKS (105 aa)) form a disordered region. The segment at 233–364 (IPDPDDKKPE…QEIPNPEYFE (132 aa)) is p domain (Extended arm). 2 stretches are compositionally biased toward basic and acidic residues: residues 234-269 (PDPDDKKPEDWDERAKIPDPEAVKPEDWDEDAPREI) and 276-295 (KPEPWLDHEPEVDDPEAKPE). 5 repeat units span residues 235 to 246 (DPDDKKPEDWDE), 252 to 263 (DPEAVKPEDWDE), 271 to 282 (DEEAEKPEPWLD), 289 to 299 (DPEAKPEDWDD), and 303 to 313 (GEWEAPKIENP). 4 X approximate repeats stretches follow at residues 235-299 (DPDD…DWDD) and 303-360 (GEWE…IPNP). The segment covering 296–305 (DWDDEEDGEW) has biased composition (acidic residues). Cys-315 and Cys-321 are disulfide-bonded. 3 tandem repeats follow at residues 322–332 (GEWKRPTKSNP), 336–346 (GKWSAPYIDNP), and 350–360 (GIWKPQEIPNP). Glu-379 is an an alpha-D-glucoside binding site. Ca(2+) is bound at residue Asp-390. N-linked (GlcNAc...) asparagine glycosylation occurs at Asn-478. Residues 481-501 (IGIIVSVVIVFVSIFFRLIFG) form a helical membrane-spanning segment. Topologically, residues 502 to 551 (GKKPANVEANVEKKKTNTETTSKQDGGEKEDNKEKEETANPPRRRPKRDN) are cytoplasmic. A disordered region spans residues 510–551 (ANVEKKKTNTETTSKQDGGEKEDNKEKEETANPPRRRPKRDN). Basic and acidic residues predominate over residues 526 to 539 (DGGEKEDNKEKEET).

It belongs to the calreticulin family. As to expression, in vegetative and flowering tissues.

Its subcellular location is the endoplasmic reticulum membrane. In terms of biological role, calcium-binding protein that interacts with newly synthesized monoglucosylated glycoproteins in the endoplasmic reticulum. It may act in assisting protein assembly and/or in the retention within the ER of unassembled protein subunits. It seems to play a major role in the quality control apparatus of the ER by the retention of incorrectly folded proteins. The chain is Calnexin homolog from Pisum sativum (Garden pea).